The sequence spans 165 residues: Nucleotide-binding protein P9515_05441 (165 aa).

It belongs to the YajQ family.

In terms of biological role, nucleotide-binding protein. This chain is Nucleotide-binding protein P9515_05441, found in Prochlorococcus marinus (strain MIT 9515).